A 364-amino-acid chain; its full sequence is Metalloendoproteinase 1-MMP (364 aa).

The first 28 residues, 1 to 28, serve as a signal peptide directing secretion; that stretch reads MSRNLIYRRNRALCFVLILFCFPYRFGA. Residues 29–149 constitute a propeptide, activation peptide; sequence RNTPEAEQST…NNDFLHTTAH (121 aa). Asn-49 carries an N-linked (GlcNAc...) asparagine glycan. The Cysteine switch motif lies at 128–135; sequence PRCGVSDT. Cys-130 lines the Zn(2+) pocket. Asp-211 is a binding site for Ca(2+). Zn(2+)-binding residues include His-221 and Asp-223. Residues Asp-228 and Gly-229 each contribute to the Ca(2+) site. His-236 is a Zn(2+) binding site. Gly-243 contributes to the Ca(2+) binding site. His-246 contributes to the Zn(2+) binding site. 2 residues coordinate Ca(2+): Asp-248 and Glu-251. His-275 is a Zn(2+) binding site. The active site involves Glu-276. The Zn(2+) site is built by His-279 and His-285. Asn-338 is a glycosylation site (N-linked (GlcNAc...) asparagine). Gly-339 carries the GPI-anchor amidated glycine lipid modification. Residues 340-364 constitute a propeptide, removed in mature form; that stretch reads TVSHRFLSGNFIGYVLLVVGLILFL.

It belongs to the peptidase M10A family. Matrix metalloproteinases (MMPs) subfamily. Ca(2+) serves as cofactor. Zn(2+) is required as a cofactor. In terms of tissue distribution, mostly expressed in flowers, roots and stems, and, to a lower extent, in leaves.

The protein localises to the cell membrane. With respect to regulation, inhibited by human TIMP-1 and TIMP-2 and by the peptide hydroxamate inhibitor (BB-94). Repressed by acetohydroxamic acid (AHA). In terms of biological role, matrix metalloproteinases (MMPs) or matrixins may play a role in the degradation and remodeling of the extracellular matrix (ECM) during development or in response to stresses. Can cleave myelin basic protein as well as fluorigenic peptide substrates, McaPLANvaDpaAR-NH(2) and McaPChaGNvaHADpa-NH(2) 4-fold more efficiently than McaPLGLDpaAR-NH(2) (QF24). Active on myelin basic protein (MBP) and, to some extent, on McaPLGLDpaAR-NH(2) (QF24) and beta-casein. The protein is Metalloendoproteinase 1-MMP of Arabidopsis thaliana (Mouse-ear cress).